The following is a 252-amino-acid chain: SPbeta prophage-derived uncharacterized protein YomH (252 aa).

In Bacillus subtilis (strain 168), this protein is SPbeta prophage-derived uncharacterized protein YomH (yomH).